Consider the following 185-residue polypeptide: Ribosome-recycling factor (185 aa).

This sequence belongs to the RRF family.

The protein resides in the cytoplasm. Responsible for the release of ribosomes from messenger RNA at the termination of protein biosynthesis. May increase the efficiency of translation by recycling ribosomes from one round of translation to another. This chain is Ribosome-recycling factor, found in Hamiltonella defensa subsp. Acyrthosiphon pisum (strain 5AT).